The primary structure comprises 211 residues: Putative truncated flagellar export/assembly protein LafU (211 aa).

The region spanning 58–176 is the OmpA-like domain; sequence LRVLIKDDQN…RIEIMVLTKS (119 aa).

Belongs to the MotB family.

The sequence is that of Putative truncated flagellar export/assembly protein LafU from Escherichia coli (strain K12).